Consider the following 365-residue polypeptide: MLIFPLINDTSRKIIHIDMDAFFAAVEERDNPALKGKPVVIGKDPRETGGRGVVSTCNYEARKYGIHSAMSSKEAYERCPKAIFISGNYEKYRTVGDQIRRIFKRYTDVVEPMSIDEAYLDVTDNKLGIKSAVKIAKLIQHDIWKEVGLTCSAGVSYNKFLAKLASDFEKPHGLTLVLKEDALCFLAKLPIEKFHGVGKKSVEKLHDMGIYTGQDLLAVPEMTLIDHFGRFGFDLYRKARGISNSPVKSDRIRKSIGSERTYAKLLYQETDIKAEISKNAKRVVALLQDHKKLGKTIVLKVRYADFITLTKRVTLPELTRDAAQIEQVAESIFDTLPEHTVGIRLLGVTMTNLEDKMADIALDLS.

The UmuC domain occupies Ile-14–Gly-198. Mg(2+)-binding residues include Asp-18 and Asp-116. Residue Glu-117 is part of the active site.

This sequence belongs to the DNA polymerase type-Y family. In terms of assembly, monomer. It depends on Mg(2+) as a cofactor.

The protein localises to the cytoplasm. The catalysed reaction is DNA(n) + a 2'-deoxyribonucleoside 5'-triphosphate = DNA(n+1) + diphosphate. Its function is as follows. Poorly processive, error-prone DNA polymerase involved in untargeted mutagenesis. Copies undamaged DNA at stalled replication forks, which arise in vivo from mismatched or misaligned primer ends. These misaligned primers can be extended by PolIV. Exhibits no 3'-5' exonuclease (proofreading) activity. May be involved in translesional synthesis, in conjunction with the beta clamp from PolIII. In Streptococcus pyogenes serotype M3 (strain ATCC BAA-595 / MGAS315), this protein is DNA polymerase IV.